Reading from the N-terminus, the 1863-residue chain is Breast cancer type 1 susceptibility protein (1863 aa).

M1 is modified (N-acetylmethionine). An RING-type zinc finger spans residues C24–K65. A Glycyl lysine isopeptide (Lys-Gly) (interchain with G-Cter in SUMO2) cross-link involves residue K109. S114 bears the Phosphoserine mark. The disordered stretch occupies residues E230–H270. Positions T248–K260 are enriched in basic and acidic residues. K301 participates in a covalent cross-link: Glycyl lysine isopeptide (Lys-Gly) (interchain with G-Cter in SUMO2). The interval N306 to K338 is disordered. Residues T327 to K338 show a composition bias toward basic and acidic residues. Residue K339 forms a Glycyl lysine isopeptide (Lys-Gly) (interchain with G-Cter in SUMO2) linkage. A phosphoserine mark is found at S395, S398, S423, and S434. Residues K443, K459, and K519 each participate in a glycyl lysine isopeptide (Lys-Gly) (interchain with G-Cter in SUMO2) cross-link. A compositionally biased stretch (low complexity) spans Q534–Q544. The segment at Q534 to P570 is disordered. S551 is modified (phosphoserine). Glycyl lysine isopeptide (Lys-Gly) (interchain with G-Cter in SUMO2) cross-links involve residues K583 and K654. The segment at K654 to F709 is disordered. S694, S708, and S725 each carry phosphoserine. Residues K734 and K739 each participate in a glycyl lysine isopeptide (Lys-Gly) (interchain with G-Cter in SUMO2) cross-link. A phosphoserine mark is found at S753 and S840. Glycyl lysine isopeptide (Lys-Gly) (interchain with G-Cter in SUMO2) cross-links involve residues K918 and K987. Position 988 is a phosphoserine; by CHEK2 (S988). Position 1009 is a phosphoserine (S1009). Residue K1079 forms a Glycyl lysine isopeptide (Lys-Gly) (interchain with G-Cter in SUMO2) linkage. Residue S1143 is modified to Phosphoserine; by ATR; in vitro. A disordered region spans residues V1181–L1216. Residues S1189, S1191, S1211, S1217, and S1218 each carry the phosphoserine modification. Phosphoserine; by ATR; in vitro is present on S1280. The tract at residues K1322–S1387 is disordered. Residues S1328, S1336, and S1342 each carry the phosphoserine modification. Residues E1373–S1387 show a composition bias toward polar residues. S1387 is modified (phosphoserine; by ATM and ATR). T1394 carries the phosphothreonine; by ATR; in vitro modification. Positions R1397 to Q1424 are interaction with PALB2. S1423 is modified (phosphoserine; by ATM and ATR). Residues E1440 to D1505 are disordered. Residues P1445–E1470 show a composition bias toward polar residues. At S1457 the chain carries Phosphoserine; by ATR; in vitro. S1524 carries the post-translational modification Phosphoserine; by ATM. S1542 is subject to Phosphoserine. Residues E1565–S1596 are disordered. BRCT domains follow at residues S1642–V1736 and Q1756–I1855.

As to quaternary structure, heterodimer with BARD1. Part of the BRCA1-associated genome surveillance complex (BASC), which contains BRCA1, MSH2, MSH6, MLH1, ATM, BLM, PMS2 and the MRE11-RAD50-NBN protein (MRN) complex. This association could be a dynamic process changing throughout the cell cycle and within subnuclear domains. Component of the BRCA1-A complex, at least composed of BRCA1, BARD1, UIMC1/RAP80, ABRAXAS1, BRCC3/BRCC36, BABAM2 and BABAM1/NBA1. Interacts (via the BRCT domains) with ABRAXAS1 (phosphorylated form); this is important for recruitment to sites of DNA damage. Can form a heterotetramer with two molecules of ABRAXAS1 (phosphorylated form). Component of the BRCA1-RBBP8 complex. Interacts (via the BRCT domains) with RBBP8 ('Ser-327' phosphorylated form); the interaction ubiquitinates RBBP8, regulates CHEK1 activation, and involves RBBP8 in BRCA1-dependent G2/M checkpoint control on DNA damage. Associates with RNA polymerase II holoenzyme. Interacts with SMC1A, NELFB, DCLRE1C, CLSPN. Interacts with CHEK1, CHEK2, BAP1, BRCC3, UBXN1 and PCLAF. Interacts (via BRCT domains) with BRIP1 (phosphorylated form). Interacts with FANCD2 (ubiquitinated form). Interacts with H2AX (phosphorylated on 'Ser-140'). Interacts (via the BRCT domains) with ACACA (phosphorylated form); the interaction prevents dephosphorylation of ACACA. Part of a BRCA complex containing BRCA1, BRCA2 and PALB2. Interacts directly with PALB2; the interaction is essential for its function in HRR. Interacts directly with BRCA2; the interaction occurs only in the presence of PALB2 which serves as the bridging protein. Interacts (via the BRCT domains) with LMO4; the interaction represses the transcriptional activity of BRCA1. Interacts (via the BRCT domains) with CCAR2 (via N-terminus); the interaction represses the transcriptional activator activity of BRCA1. Interacts with EXD2. Interacts (via C-terminus) with DHX9; this interaction is direct and links BRCA1 to the RNA polymerase II holoenzyme. Interacts with DNA helicase ZGRF1; the interaction is increased following DNA damage induction. Post-translationally, phosphorylated in response to IR, UV, and various stimuli that cause checkpoint activation, probably by ATM or ATR. Phosphorylation at Ser-988 by CHEK2 regulates mitotic spindle assembly. Phosphorylation by AURKA regulates centrosomal microtubule nucleation. In terms of processing, autoubiquitinated, undergoes 'Lys-6'-linked polyubiquitination. 'Lys-6'-linked polyubiquitination does not promote degradation. In terms of tissue distribution, isoform 1 and isoform 3 are widely expressed. Isoform 3 is reduced or absent in several breast and ovarian cancer cell lines.

The protein resides in the nucleus. It is found in the chromosome. The protein localises to the cytoplasm. The enzyme catalyses S-ubiquitinyl-[E2 ubiquitin-conjugating enzyme]-L-cysteine + [acceptor protein]-L-lysine = [E2 ubiquitin-conjugating enzyme]-L-cysteine + N(6)-ubiquitinyl-[acceptor protein]-L-lysine.. It functions in the pathway protein modification; protein ubiquitination. The E3 ubiquitin-protein ligase activity is inhibited by phosphorylation by AURKA. Activity is increased by phosphatase treatment. Its function is as follows. E3 ubiquitin-protein ligase that specifically mediates the formation of 'Lys-6'-linked polyubiquitin chains and plays a central role in DNA repair by facilitating cellular responses to DNA damage. It is unclear whether it also mediates the formation of other types of polyubiquitin chains. The BRCA1-BARD1 heterodimer coordinates a diverse range of cellular pathways such as DNA damage repair, ubiquitination and transcriptional regulation to maintain genomic stability. Regulates centrosomal microtubule nucleation. Required for appropriate cell cycle arrests after ionizing irradiation in both the S-phase and the G2 phase of the cell cycle. Required for FANCD2 targeting to sites of DNA damage. Inhibits lipid synthesis by binding to inactive phosphorylated ACACA and preventing its dephosphorylation. Contributes to homologous recombination repair (HRR) via its direct interaction with PALB2, fine-tunes recombinational repair partly through its modulatory role in the PALB2-dependent loading of BRCA2-RAD51 repair machinery at DNA breaks. Component of the BRCA1-RBBP8 complex which regulates CHEK1 activation and controls cell cycle G2/M checkpoints on DNA damage via BRCA1-mediated ubiquitination of RBBP8. Acts as a transcriptional activator. The chain is Breast cancer type 1 susceptibility protein (BRCA1) from Homo sapiens (Human).